A 502-amino-acid polypeptide reads, in one-letter code: ATP synthase subunit alpha (502 aa).

169 to 176 (GDRQTGKT) lines the ATP pocket.

Belongs to the ATPase alpha/beta chains family. In terms of assembly, F-type ATPases have 2 components, CF(1) - the catalytic core - and CF(0) - the membrane proton channel. CF(1) has five subunits: alpha(3), beta(3), gamma(1), delta(1), epsilon(1). CF(0) has three main subunits: a(1), b(2) and c(9-12). The alpha and beta chains form an alternating ring which encloses part of the gamma chain. CF(1) is attached to CF(0) by a central stalk formed by the gamma and epsilon chains, while a peripheral stalk is formed by the delta and b chains.

The protein resides in the cell membrane. It carries out the reaction ATP + H2O + 4 H(+)(in) = ADP + phosphate + 5 H(+)(out). Produces ATP from ADP in the presence of a proton gradient across the membrane. The alpha chain is a regulatory subunit. The protein is ATP synthase subunit alpha of Bacillus sp. (strain PS3).